Consider the following 332-residue polypeptide: NADH-quinone oxidoreductase subunit H (332 aa).

Helical transmembrane passes span 4–24, 44–64, 78–98, 120–140, 165–185, 194–214, 255–275, 279–299, and 312–332; these read FAFFALETLIKCIIIIAIFAS, IGPDMVGPFGLIQLVADMIKL, FIFAIAPLISAICAFVSLAAI, VALLFVIGTSGLCFYAVFLGG, VGALALIAIIMLVGSFSLVDI, FSWLIFKQPLAFVLFIIALFI, IAGAILVTLLFLGGFNSFWII, IMMIVKSSFIFFWYFWARAAF, and YLILIPLAVLNLLITALTVLL.

The protein belongs to the complex I subunit 1 family. As to quaternary structure, NDH-1 is composed of 14 different subunits. Subunits NuoA, H, J, K, L, M, N constitute the membrane sector of the complex.

The protein resides in the cell inner membrane. The catalysed reaction is a quinone + NADH + 5 H(+)(in) = a quinol + NAD(+) + 4 H(+)(out). Its function is as follows. NDH-1 shuttles electrons from NADH, via FMN and iron-sulfur (Fe-S) centers, to quinones in the respiratory chain. The immediate electron acceptor for the enzyme in this species is believed to be ubiquinone. Couples the redox reaction to proton translocation (for every two electrons transferred, four hydrogen ions are translocated across the cytoplasmic membrane), and thus conserves the redox energy in a proton gradient. This subunit may bind ubiquinone. The chain is NADH-quinone oxidoreductase subunit H from Campylobacter jejuni subsp. jejuni serotype O:23/36 (strain 81-176).